We begin with the raw amino-acid sequence, 367 residues long: 3-dehydroquinate synthase (367 aa).

Residues 111 to 115, 135 to 136, K148, K157, and 175 to 178 each bind NAD(+); these read GVVGD, TS, and TLDT. Residues E190, H254, and H271 each coordinate Zn(2+).

This sequence belongs to the sugar phosphate cyclases superfamily. Dehydroquinate synthase family. The cofactor is Co(2+). Zn(2+) is required as a cofactor. It depends on NAD(+) as a cofactor.

Its subcellular location is the cytoplasm. The enzyme catalyses 7-phospho-2-dehydro-3-deoxy-D-arabino-heptonate = 3-dehydroquinate + phosphate. The protein operates within metabolic intermediate biosynthesis; chorismate biosynthesis; chorismate from D-erythrose 4-phosphate and phosphoenolpyruvate: step 2/7. Functionally, catalyzes the conversion of 3-deoxy-D-arabino-heptulosonate 7-phosphate (DAHP) to dehydroquinate (DHQ). In Salinibacter ruber (strain DSM 13855 / M31), this protein is 3-dehydroquinate synthase.